We begin with the raw amino-acid sequence, 184 residues long: Photosystem I assembly protein Ycf4 (184 aa).

2 helical membrane-spanning segments follow: residues 22–42 (FCWA…GTSS) and 57–77 (ILFF…LFIS).

This sequence belongs to the Ycf4 family.

The protein resides in the plastid. It is found in the chloroplast thylakoid membrane. Seems to be required for the assembly of the photosystem I complex. In Chloranthus spicatus (Chulantree), this protein is Photosystem I assembly protein Ycf4.